An 88-amino-acid chain; its full sequence is Toxin ICK-12 (88 aa).

Positions 1 to 19 (MKSIVYMLLFCTFTVVILG) are cleaved as a signal peptide. Disulfide bonds link Cys41/Cys55, Cys41/Cys78, Cys54/Cys67, and Cys81/Cys88.

This sequence belongs to the neurotoxin 27 (Jztx-72) family. ICK-41 subfamily. In terms of tissue distribution, expressed by the venom gland.

Its subcellular location is the secreted. Probable neurotoxin with ion channel impairing activity. The polypeptide is Toxin ICK-12 (Trittame loki (Brush-footed trapdoor spider)).